The following is a 518-amino-acid chain: Membrane-bound lytic murein transglycosylase F (518 aa).

Residues 1–21 (MKKLKINYLFIGILALLLAVA) form the signal peptide. The segment at 22–269 (LWPSIPWFGK…RIEEKYLGHG (248 aa)) is non-LT domain. The segment at 270-518 (DDFDYVDTRT…SRKGSEEKQN (249 aa)) is LT domain. The active site involves glutamate 314.

It in the N-terminal section; belongs to the bacterial solute-binding protein 3 family. This sequence in the C-terminal section; belongs to the transglycosylase Slt family.

It is found in the cell outer membrane. The enzyme catalyses Exolytic cleavage of the (1-&gt;4)-beta-glycosidic linkage between N-acetylmuramic acid (MurNAc) and N-acetylglucosamine (GlcNAc) residues in peptidoglycan, from either the reducing or the non-reducing ends of the peptidoglycan chains, with concomitant formation of a 1,6-anhydrobond in the MurNAc residue.. Its function is as follows. Murein-degrading enzyme that degrades murein glycan strands and insoluble, high-molecular weight murein sacculi, with the concomitant formation of a 1,6-anhydromuramoyl product. Lytic transglycosylases (LTs) play an integral role in the metabolism of the peptidoglycan (PG) sacculus. Their lytic action creates space within the PG sacculus to allow for its expansion as well as for the insertion of various structures such as secretion systems and flagella. In Escherichia coli O6:H1 (strain CFT073 / ATCC 700928 / UPEC), this protein is Membrane-bound lytic murein transglycosylase F.